Consider the following 245-residue polypeptide: MAMTLSTKAFAQRGVSARKNTVRVYAASTKVNPKLASKTEVERFKQATGLPAPAINGKQFPLKLGFTKTNELFVGRLAMVGFSASLIGEILTGKGALAQFGYETGLNGIEVDGLVIGLIAFNLIAAVLPTSQTFVPEEQDTISERPAGPLQDPRITLLEPKKFFGVQGFGFTKENELFVGRAAQLGFAFSLIGEAVTGKGALAQFDIETGLSLRDTEFGLVVFILFLLFAAINEGSGKFVDEESA.

The transit peptide at 1–25 (MAMTLSTKAFAQRGVSARKNTVRVY) directs the protein to the chloroplast. Helical transmembrane passes span 72–92 (LFVGRLAMVGFSASLIGEILT), 108–128 (GIEVDGLVIGLIAFNLIAAVL), 185–205 (LGFAFSLIGEAVTGKGALAQF), and 217–237 (EFGLVVFILFLLFAAINEGSG).

It belongs to the ELIP/psbS family.

Its subcellular location is the plastid. It localises to the chloroplast thylakoid membrane. In terms of biological role, required for non-photochemical quenching (NPQ), a mechanism that converts and dissipates the harmful excess absorbed light energy into heat and protect the photosynthetic apparatus from photo-oxidative damage. Seems involved in the activation of NPQ, possibly by promoting conformational changes required for activation of LHCSR3-dependent quenching in the antenna of photosystem II (PSII). The protein is Photosystem II protein PSBS1 of Chlamydomonas reinhardtii (Chlamydomonas smithii).